Reading from the N-terminus, the 102-residue chain is Protein translation factor SUI1 homolog (102 aa).

The protein belongs to the SUI1 family.

The chain is Protein translation factor SUI1 homolog from Methanosarcina acetivorans (strain ATCC 35395 / DSM 2834 / JCM 12185 / C2A).